A 38-amino-acid polypeptide reads, in one-letter code: Large ribosomal subunit protein bL36 (38 aa).

It belongs to the bacterial ribosomal protein bL36 family.

In Kosmotoga olearia (strain ATCC BAA-1733 / DSM 21960 / TBF 19.5.1), this protein is Large ribosomal subunit protein bL36.